The sequence spans 303 residues: Fe-S cluster assembly protein DRE2 (303 aa).

The segment at 1 to 125 is N-terminal SAM-like domain; it reads MTHSRTALVL…WQKRAVTASA (125 aa). The segment at 126–188 is linker; it reads PVKLAPRQPV…GDAPIAENDL (63 aa). C202, C213, C216, and C218 together coordinate [2Fe-2S] cluster. Positions 202-218 are fe-S binding site A; that stretch reads CGRTQTRRRKACKDCTC. Residues C266, C269, C277, and C280 each contribute to the [4Fe-4S] cluster site. 2 short sequence motifs (cx2C motif) span residues 266–269 and 277–280; these read CGSC and CSGC. Residues 266–280 are fe-S binding site B; the sequence is CGSCSLGDAFRCSGC.

This sequence belongs to the anamorsin family. As to quaternary structure, monomer. Interacts with TAH18. Interacts with MIA40. [2Fe-2S] cluster is required as a cofactor. It depends on [4Fe-4S] cluster as a cofactor.

Its subcellular location is the cytoplasm. It is found in the mitochondrion intermembrane space. Component of the cytosolic iron-sulfur (Fe-S) protein assembly (CIA) machinery required for the maturation of extramitochondrial Fe-S proteins. Part of an electron transfer chain functioning in an early step of cytosolic Fe-S biogenesis, facilitating the de novo assembly of a [4Fe-4S] cluster on the scaffold complex CFD1-NBP35. Electrons are transferred to DRE2 from NADPH via the FAD- and FMN-containing protein TAH18. TAH18-DRE2 are also required for the assembly of the diferric tyrosyl radical cofactor of ribonucleotide reductase (RNR), probably by providing electrons for reduction during radical cofactor maturation in the catalytic small subunit RNR2. This is Fe-S cluster assembly protein DRE2 from Eremothecium gossypii (strain ATCC 10895 / CBS 109.51 / FGSC 9923 / NRRL Y-1056) (Yeast).